The sequence spans 469 residues: ATP-dependent protease ATPase subunit HslU (469 aa).

ATP is bound by residues Ile24 and 66-71; that span reads GVGKTE. The disordered stretch occupies residues 159-179; sequence LFGSMNQPDEPAEEEVDQELK. Positions 282, 347, and 419 each coordinate ATP.

The protein belongs to the ClpX chaperone family. HslU subfamily. A double ring-shaped homohexamer of HslV is capped on each side by a ring-shaped HslU homohexamer. The assembly of the HslU/HslV complex is dependent on binding of ATP.

Its subcellular location is the cytoplasm. Its function is as follows. ATPase subunit of a proteasome-like degradation complex; this subunit has chaperone activity. The binding of ATP and its subsequent hydrolysis by HslU are essential for unfolding of protein substrates subsequently hydrolyzed by HslV. HslU recognizes the N-terminal part of its protein substrates and unfolds these before they are guided to HslV for hydrolysis. The polypeptide is ATP-dependent protease ATPase subunit HslU (Listeria innocua serovar 6a (strain ATCC BAA-680 / CLIP 11262)).